The primary structure comprises 156 residues: Lipoprotein signal peptidase (156 aa).

Helical transmembrane passes span 5 to 25 (FKFI…DQWV), 64 to 84 (YLHL…RTLL), and 89 to 109 (IAFG…FIHG). Catalysis depends on residues Asp113 and Asp130. Residues 122–142 (NFAIFNVADVMINISVALILI) form a helical membrane-spanning segment.

Belongs to the peptidase A8 family.

It is found in the cell inner membrane. It carries out the reaction Release of signal peptides from bacterial membrane prolipoproteins. Hydrolyzes -Xaa-Yaa-Zaa-|-(S,diacylglyceryl)Cys-, in which Xaa is hydrophobic (preferably Leu), and Yaa (Ala or Ser) and Zaa (Gly or Ala) have small, neutral side chains.. It participates in protein modification; lipoprotein biosynthesis (signal peptide cleavage). In terms of biological role, this protein specifically catalyzes the removal of signal peptides from prolipoproteins. The protein is Lipoprotein signal peptidase of Campylobacter jejuni subsp. jejuni serotype O:2 (strain ATCC 700819 / NCTC 11168).